We begin with the raw amino-acid sequence, 95 residues long: Aspartyl/glutamyl-tRNA(Asn/Gln) amidotransferase subunit C (95 aa).

The protein belongs to the GatC family. Heterotrimer of A, B and C subunits.

It carries out the reaction L-glutamyl-tRNA(Gln) + L-glutamine + ATP + H2O = L-glutaminyl-tRNA(Gln) + L-glutamate + ADP + phosphate + H(+). The enzyme catalyses L-aspartyl-tRNA(Asn) + L-glutamine + ATP + H2O = L-asparaginyl-tRNA(Asn) + L-glutamate + ADP + phosphate + 2 H(+). Functionally, allows the formation of correctly charged Asn-tRNA(Asn) or Gln-tRNA(Gln) through the transamidation of misacylated Asp-tRNA(Asn) or Glu-tRNA(Gln) in organisms which lack either or both of asparaginyl-tRNA or glutaminyl-tRNA synthetases. The reaction takes place in the presence of glutamine and ATP through an activated phospho-Asp-tRNA(Asn) or phospho-Glu-tRNA(Gln). The sequence is that of Aspartyl/glutamyl-tRNA(Asn/Gln) amidotransferase subunit C from Rhizobium johnstonii (strain DSM 114642 / LMG 32736 / 3841) (Rhizobium leguminosarum bv. viciae).